The primary structure comprises 230 residues: Orotidine 5'-phosphate decarboxylase (230 aa).

Residues Asp-8, Lys-32, 59–68, Thr-118, Arg-178, Gln-187, Gly-207, and Arg-208 contribute to the substrate site; that span reads DLKLYDIPNT. Catalysis depends on Lys-61, which acts as the Proton donor.

This sequence belongs to the OMP decarboxylase family. Type 1 subfamily. As to quaternary structure, homodimer.

It carries out the reaction orotidine 5'-phosphate + H(+) = UMP + CO2. Its pathway is pyrimidine metabolism; UMP biosynthesis via de novo pathway; UMP from orotate: step 2/2. Functionally, catalyzes the decarboxylation of orotidine 5'-monophosphate (OMP) to uridine 5'-monophosphate (UMP). The protein is Orotidine 5'-phosphate decarboxylase of Nautilia profundicola (strain ATCC BAA-1463 / DSM 18972 / AmH).